The sequence spans 197 residues: Probable GTP-binding protein EngB (197 aa).

Residues 25-197 enclose the EngB-type G domain; it reads SAPEIAFAGR…VRDEFFKFTR (173 aa). GTP contacts are provided by residues 33-40, 60-64, 79-82, 146-149, and 177-179; these read GRSNVGKS, GCTRQ, DLPG, TKID, and ISV. Mg(2+) contacts are provided by serine 40 and threonine 62.

Belongs to the TRAFAC class TrmE-Era-EngA-EngB-Septin-like GTPase superfamily. EngB GTPase family. The cofactor is Mg(2+).

Its function is as follows. Necessary for normal cell division and for the maintenance of normal septation. The chain is Probable GTP-binding protein EngB from Wolbachia sp. subsp. Brugia malayi (strain TRS).